Here is a 542-residue protein sequence, read N- to C-terminus: Hydroxylamine reductase (542 aa).

Positions 3, 6, 15, and 21 each coordinate [4Fe-4S] cluster. Hybrid [4Fe-2O-2S] cluster-binding residues include histidine 243, glutamate 267, cysteine 311, cysteine 398, cysteine 426, cysteine 451, glutamate 485, and lysine 487. The residue at position 398 (cysteine 398) is a Cysteine persulfide.

It belongs to the HCP family. [4Fe-4S] cluster is required as a cofactor. The cofactor is hybrid [4Fe-2O-2S] cluster.

It is found in the cytoplasm. The enzyme catalyses A + NH4(+) + H2O = hydroxylamine + AH2 + H(+). Functionally, catalyzes the reduction of hydroxylamine to form NH(3) and H(2)O. The polypeptide is Hydroxylamine reductase (Syntrophobacter fumaroxidans (strain DSM 10017 / MPOB)).